The sequence spans 218 residues: Small ribosomal subunit protein uS3 (218 aa).

The KH type-2 domain maps to 38–106; it reads LRSDLKKKLM…PVHLNIEEVK (69 aa).

The protein belongs to the universal ribosomal protein uS3 family. Part of the 30S ribosomal subunit. Forms a tight complex with proteins S10 and S14.

Functionally, binds the lower part of the 30S subunit head. Binds mRNA in the 70S ribosome, positioning it for translation. The polypeptide is Small ribosomal subunit protein uS3 (Legionella pneumophila (strain Lens)).